The primary structure comprises 364 residues: Dihydroorotate dehydrogenase (quinone) (364 aa).

Residues 61 to 65 and T85 contribute to the FMN site; that span reads AGFDK. Substrate is bound at residue K65. 110 to 114 contributes to the substrate binding site; sequence NRMGF. The FMN site is built by N139 and N170. Residue N170 coordinates substrate. Residue S173 is the Nucleophile of the active site. Residue N175 participates in substrate binding. Residues K214 and A242 each contribute to the FMN site. 243–244 serves as a coordination point for substrate; it reads NT. FMN is bound by residues G266, G295, and 316–317; that span reads YS.

The protein belongs to the dihydroorotate dehydrogenase family. Type 2 subfamily. As to quaternary structure, monomer. It depends on FMN as a cofactor.

The protein localises to the cell membrane. It catalyses the reaction (S)-dihydroorotate + a quinone = orotate + a quinol. It participates in pyrimidine metabolism; UMP biosynthesis via de novo pathway; orotate from (S)-dihydroorotate (quinone route): step 1/1. In terms of biological role, catalyzes the conversion of dihydroorotate to orotate with quinone as electron acceptor. The protein is Dihydroorotate dehydrogenase (quinone) of Rhodopseudomonas palustris (strain ATCC BAA-98 / CGA009).